Consider the following 598-residue polypeptide: Probable pectinesterase/pectinesterase inhibitor 34 (598 aa).

A disordered region spans residues M1–R40. The segment covering G7–P23 has biased composition (low complexity). Polar residues predominate over residues I24 to N36. The chain crosses the membrane as a helical span at residues V46–V66. The segment at R81–I232 is pectinesterase inhibitor 34. Residues D284–S582 are pectinesterase 34. Substrate is bound by residues T360 and Q390. D413 (proton donor; for pectinesterase activity) is an active-site residue. C427 and C447 are joined by a disulfide. The active-site Nucleophile; for pectinesterase activity is D434. Residues R502 and W504 each contribute to the substrate site.

In the N-terminal section; belongs to the PMEI family. It in the C-terminal section; belongs to the pectinesterase family. In terms of tissue distribution, expressed in siliques.

The protein localises to the membrane. The catalysed reaction is [(1-&gt;4)-alpha-D-galacturonosyl methyl ester](n) + n H2O = [(1-&gt;4)-alpha-D-galacturonosyl](n) + n methanol + n H(+). It participates in glycan metabolism; pectin degradation; 2-dehydro-3-deoxy-D-gluconate from pectin: step 1/5. In terms of biological role, acts in the modification of cell walls via demethylesterification of cell wall pectin. This chain is Probable pectinesterase/pectinesterase inhibitor 34 (PME34), found in Arabidopsis thaliana (Mouse-ear cress).